The sequence spans 410 residues: Shaggy-related protein kinase epsilon (410 aa).

Ala-2 carries the post-translational modification N-acetylalanine. One can recognise a Protein kinase domain in the interval 74 to 358 (YMAERIVGQG…AMEAIVHPFF (285 aa)). ATP is bound by residues 80 to 88 (VGQGSFGIV) and Lys-103. Asp-199 serves as the catalytic Proton acceptor. Phosphotyrosine is present on Tyr-234.

It belongs to the protein kinase superfamily. CMGC Ser/Thr protein kinase family. GSK-3 subfamily. As to quaternary structure, binds to KIB1. In terms of processing, autophosphorylated mainly on threonine and serine residues.

It catalyses the reaction L-seryl-[protein] + ATP = O-phospho-L-seryl-[protein] + ADP + H(+). It carries out the reaction L-threonyl-[protein] + ATP = O-phospho-L-threonyl-[protein] + ADP + H(+). Functionally, may mediate extracellular signals to regulate transcription in differentiating cells. This is Shaggy-related protein kinase epsilon (ASK5) from Arabidopsis thaliana (Mouse-ear cress).